The chain runs to 364 residues: Aminomethyltransferase (364 aa).

The protein belongs to the GcvT family. In terms of assembly, the glycine cleavage system is composed of four proteins: P, T, L and H.

It carries out the reaction N(6)-[(R)-S(8)-aminomethyldihydrolipoyl]-L-lysyl-[protein] + (6S)-5,6,7,8-tetrahydrofolate = N(6)-[(R)-dihydrolipoyl]-L-lysyl-[protein] + (6R)-5,10-methylene-5,6,7,8-tetrahydrofolate + NH4(+). The glycine cleavage system catalyzes the degradation of glycine. The polypeptide is Aminomethyltransferase (Thermotoga sp. (strain RQ2)).